A 446-amino-acid chain; its full sequence is Adenylosuccinate synthetase 1 (446 aa).

Residues 20 to 26 and 48 to 50 contribute to the GTP site; these read GDEGKGK and GHT. The Proton acceptor role is filled by Asp-21. 2 residues coordinate Mg(2+): Asp-21 and Gly-48. IMP contacts are provided by residues 21–24, 46–49, Thr-137, Arg-151, Gln-232, Thr-247, and Arg-319; these read DEGK and NAGH. His-49 functions as the Proton donor in the catalytic mechanism. Residue 315–321 coordinates substrate; it reads SVTGRPR. GTP contacts are provided by residues Arg-321, 347-349, and 429-431; these read KLD and STG.

It belongs to the adenylosuccinate synthetase family. In terms of assembly, homodimer. Requires Mg(2+) as cofactor.

The protein localises to the cytoplasm. It carries out the reaction IMP + L-aspartate + GTP = N(6)-(1,2-dicarboxyethyl)-AMP + GDP + phosphate + 2 H(+). The protein operates within purine metabolism; AMP biosynthesis via de novo pathway; AMP from IMP: step 1/2. Its function is as follows. Plays an important role in the de novo pathway of purine nucleotide biosynthesis. Catalyzes the first committed step in the biosynthesis of AMP from IMP. The sequence is that of Adenylosuccinate synthetase 1 from Cupriavidus pinatubonensis (strain JMP 134 / LMG 1197) (Cupriavidus necator (strain JMP 134)).